The sequence spans 373 residues: 4-hydroxy-3-methylbut-2-en-1-yl diphosphate synthase (flavodoxin) (373 aa).

[4Fe-4S] cluster is bound by residues Cys-270, Cys-273, Cys-305, and Glu-312.

The protein belongs to the IspG family. It depends on [4Fe-4S] cluster as a cofactor.

The catalysed reaction is (2E)-4-hydroxy-3-methylbut-2-enyl diphosphate + oxidized [flavodoxin] + H2O + 2 H(+) = 2-C-methyl-D-erythritol 2,4-cyclic diphosphate + reduced [flavodoxin]. It participates in isoprenoid biosynthesis; isopentenyl diphosphate biosynthesis via DXP pathway; isopentenyl diphosphate from 1-deoxy-D-xylulose 5-phosphate: step 5/6. Converts 2C-methyl-D-erythritol 2,4-cyclodiphosphate (ME-2,4cPP) into 1-hydroxy-2-methyl-2-(E)-butenyl 4-diphosphate. This Photorhabdus laumondii subsp. laumondii (strain DSM 15139 / CIP 105565 / TT01) (Photorhabdus luminescens subsp. laumondii) protein is 4-hydroxy-3-methylbut-2-en-1-yl diphosphate synthase (flavodoxin).